The sequence spans 707 residues: Ribosomal RNA large subunit methyltransferase K/L (707 aa).

The THUMP domain occupies 44–155 (VIYNLCLWSR…NDILTVSFDL (112 aa)).

Belongs to the methyltransferase superfamily. RlmKL family.

It localises to the cytoplasm. It carries out the reaction guanosine(2445) in 23S rRNA + S-adenosyl-L-methionine = N(2)-methylguanosine(2445) in 23S rRNA + S-adenosyl-L-homocysteine + H(+). The enzyme catalyses guanosine(2069) in 23S rRNA + S-adenosyl-L-methionine = N(2)-methylguanosine(2069) in 23S rRNA + S-adenosyl-L-homocysteine + H(+). In terms of biological role, specifically methylates the guanine in position 2445 (m2G2445) and the guanine in position 2069 (m7G2069) of 23S rRNA. This Legionella pneumophila (strain Lens) protein is Ribosomal RNA large subunit methyltransferase K/L.